A 133-amino-acid polypeptide reads, in one-letter code: Interleukin-4 (133 aa).

Residues 1-24 (MGLTSQLIPTLVCLLACTSNFVHG) form the signal peptide. 3 disulfide bridges follow: Cys-27–Cys-133, Cys-48–Cys-85, and Cys-70–Cys-105. Asn-62 carries an N-linked (GlcNAc...) asparagine glycan.

This sequence belongs to the IL-4/IL-13 family.

Its subcellular location is the secreted. Its function is as follows. Participates in at least several B-cell activation processes as well as of other cell types. It is a costimulator of DNA-synthesis. It induces the expression of class II MHC molecules on resting B-cells. It enhances both secretion and cell surface expression of IgE and IgG1. It also regulates the expression of the low affinity Fc receptor for IgE (CD23) on both lymphocytes and monocytes. Positively regulates IL31RA expression in macrophages. Stimulates autophagy in dendritic cells by interfering with mTORC1 signaling and through the induction of RUFY4. The sequence is that of Interleukin-4 (IL4) from Sus scrofa (Pig).